The sequence spans 181 residues: Large ribosomal subunit protein uL5 (181 aa).

The protein belongs to the universal ribosomal protein uL5 family. As to quaternary structure, part of the 50S ribosomal subunit; contacts the 5S rRNA and probably tRNA. Forms a bridge to the 30S subunit in the 70S ribosome.

This is one of the proteins that bind and probably mediate the attachment of the 5S RNA into the large ribosomal subunit, where it forms part of the central protuberance. In the 70S ribosome it contacts protein S13 of the 30S subunit (bridge B1b), connecting the 2 subunits; this bridge is implicated in subunit movement. May contact the P site tRNA; the 5S rRNA and some of its associated proteins might help stabilize positioning of ribosome-bound tRNAs. This is Large ribosomal subunit protein uL5 from Methanococcus maripaludis (strain DSM 14266 / JCM 13030 / NBRC 101832 / S2 / LL).